Here is a 365-residue protein sequence, read N- to C-terminus: Probable 7-methylxanthine methyltransferase 4 (365 aa).

Position 18 (Tyr18) interacts with S-adenosyl-L-homocysteine. Residue Thr25 coordinates theobromine. Residues Cys62, Gln67, Asp99, Leu100, Ser132, and Phe133 each coordinate S-adenosyl-L-homocysteine. Residues Tyr150, His153, and Trp154 each coordinate theobromine. Residues Asn170, Asp256, Phe258, and Asn259 each contribute to the Mg(2+) site. Residue Phe311 coordinates theobromine.

Belongs to the methyltransferase superfamily. Type-7 methyltransferase family. Mg(2+) serves as cofactor.

The enzyme catalyses 7-methylxanthine + S-adenosyl-L-methionine = theobromine + S-adenosyl-L-homocysteine + H(+). It functions in the pathway alkaloid biosynthesis. Involved in the biosynthesis of theobromine. The chain is Probable 7-methylxanthine methyltransferase 4 from Theobroma cacao (Cacao).